Here is a 124-residue protein sequence, read N- to C-terminus: Large ribosomal subunit protein uL22 (124 aa).

Belongs to the universal ribosomal protein uL22 family. In terms of assembly, part of the 50S ribosomal subunit.

In terms of biological role, this protein binds specifically to 23S rRNA; its binding is stimulated by other ribosomal proteins, e.g. L4, L17, and L20. It is important during the early stages of 50S assembly. It makes multiple contacts with different domains of the 23S rRNA in the assembled 50S subunit and ribosome. Its function is as follows. The globular domain of the protein is located near the polypeptide exit tunnel on the outside of the subunit, while an extended beta-hairpin is found that lines the wall of the exit tunnel in the center of the 70S ribosome. The protein is Large ribosomal subunit protein uL22 of Campylobacter lari (strain RM2100 / D67 / ATCC BAA-1060).